The chain runs to 1682 residues: Cilia- and flagella-associated protein 43 (1682 aa).

6 WD repeats span residues 168–207 (NPGM…QEHH), 262–305 (PKDD…VTVL), 315–354 (DGAP…YQVK), 358–397 (EFDG…PLDK), 488–527 (LSQS…SFQI), and 697–738 (SHQG…ANIA). A disordered region spans residues 767–790 (RESTNEQQEETTESQKHLNSDSSE). Coiled-coil stretches lie at residues 926–960 (KERT…VEVQ) and 1171–1223 (SEDE…HLKR).

The protein belongs to the CFAP43 family. As to expression, expressed in testis. Expressed in the lung, brain, oviduct and nasal cavity.

Its subcellular location is the cell projection. It is found in the cilium. The protein localises to the flagellum. The protein resides in the cytoplasm. It localises to the cytoskeleton. Its subcellular location is the flagellum axoneme. It is found in the cilium axoneme. Its function is as follows. Flagellar protein involved in sperm flagellum axoneme organization and function. Involved in the regulation of the beating frequency of motile cilia on the epithelial cells of the respiratory tract. This Mus musculus (Mouse) protein is Cilia- and flagella-associated protein 43.